Consider the following 539-residue polypeptide: Chaperonin GroEL (539 aa).

ATP contacts are provided by residues 29 to 32 (TLGP), 86 to 90 (DGTTT), G413, and D492.

The protein belongs to the chaperonin (HSP60) family. As to quaternary structure, forms a cylinder of 14 subunits composed of two heptameric rings stacked back-to-back. Interacts with the co-chaperonin GroES.

Its subcellular location is the cytoplasm. The enzyme catalyses ATP + H2O + a folded polypeptide = ADP + phosphate + an unfolded polypeptide.. Its function is as follows. Together with its co-chaperonin GroES, plays an essential role in assisting protein folding. The GroEL-GroES system forms a nano-cage that allows encapsulation of the non-native substrate proteins and provides a physical environment optimized to promote and accelerate protein folding. This Fusobacterium nucleatum subsp. nucleatum (strain ATCC 25586 / DSM 15643 / BCRC 10681 / CIP 101130 / JCM 8532 / KCTC 2640 / LMG 13131 / VPI 4355) protein is Chaperonin GroEL.